Reading from the N-terminus, the 739-residue chain is Catalase-peroxidase 2 (739 aa).

Residues 1–26 (MKKSTIPSMSALTLAMSLAFGGAAIA) form the signal peptide. The segment at residues 105-227 (WHSAGVYRIF…MGATQMGLIY (123 aa)) is a cross-link (tryptophyl-tyrosyl-methioninium (Trp-Tyr) (with M-253)). The active-site Proton acceptor is the histidine 106. Positions 227–253 (YVNPEGPNGVPDPLASAKEIRDTFGRM) form a cross-link, tryptophyl-tyrosyl-methioninium (Tyr-Met) (with W-105). Histidine 268 lines the heme b pocket.

This sequence belongs to the peroxidase family. Peroxidase/catalase subfamily. Homodimer or homotetramer. It depends on heme b as a cofactor. In terms of processing, formation of the three residue Trp-Tyr-Met cross-link is important for the catalase, but not the peroxidase activity of the enzyme.

The catalysed reaction is H2O2 + AH2 = A + 2 H2O. It catalyses the reaction 2 H2O2 = O2 + 2 H2O. Functionally, bifunctional enzyme with both catalase and broad-spectrum peroxidase activity. In Shewanella sp. (strain ANA-3), this protein is Catalase-peroxidase 2.